Here is a 384-residue protein sequence, read N- to C-terminus: Spermidine/putrescine import ATP-binding protein PotA (384 aa).

Residues I26–I260 enclose the ABC transporter domain. Residue G62–T69 coordinates ATP.

It belongs to the ABC transporter superfamily. Spermidine/putrescine importer (TC 3.A.1.11.1) family. In terms of assembly, the complex is composed of two ATP-binding proteins (PotA), two transmembrane proteins (PotB and PotC) and a solute-binding protein (PotD).

The protein localises to the cell membrane. The catalysed reaction is ATP + H2O + polyamine-[polyamine-binding protein]Side 1 = ADP + phosphate + polyamineSide 2 + [polyamine-binding protein]Side 1.. Part of the ABC transporter complex PotABCD involved in spermidine/putrescine import. Responsible for energy coupling to the transport system. The chain is Spermidine/putrescine import ATP-binding protein PotA from Thermobifida fusca (strain YX).